The chain runs to 508 residues: Citrate lyase alpha chain (508 aa).

As to quaternary structure, oligomer with a subunit composition of (alpha,beta,gamma)6.

Its subcellular location is the cytoplasm. It carries out the reaction citrate = oxaloacetate + acetate. The catalysed reaction is citrate + acetyl-CoA = (3S)-citryl-CoA + acetate. Its function is as follows. Represents a citrate:acetyl-ACP transferase. In Klebsiella pneumoniae, this protein is Citrate lyase alpha chain (citF).